The chain runs to 70 residues: Phycocyanin-645 alpha-2 chain (70 aa).

Arg16 provides a ligand contact to (2R,3E)-phycocyanobilin. Mesobiliverdin is bound by residues Cys18, Tyr26, and Lys41.

The protein belongs to the phycoerythrin family. Heterotetramer of 2 different alpha chains and 2 identical beta chains which form 2 alpha-beta heterodimers within the heterotetramer. Post-translationally, contains one phycocyanobilin chromophore, one mesobiliverdin chromophore and one 15,16-dihydrobiliverdin chromophore with binding mediated by both the alpha and beta subunits.

The protein resides in the plastid. The protein localises to the chloroplast thylakoid membrane. In terms of biological role, light-harvesting photosynthetic tetrapyrrole chromophore-protein from the phycobiliprotein complex. This is Phycocyanin-645 alpha-2 chain from Chroomonas sp.